Here is a 404-residue protein sequence, read N- to C-terminus: 5-aminolevulinate synthase (404 aa).

Substrate contacts are provided by Arg21 and Ser136. Pyridoxal 5'-phosphate-binding residues include Ser188, His216, and Thr244. Residue Lys247 is part of the active site. The residue at position 247 (Lys247) is an N6-(pyridoxal phosphate)lysine. Thr276 and Thr277 together coordinate pyridoxal 5'-phosphate. Thr362 contributes to the substrate binding site.

This sequence belongs to the class-II pyridoxal-phosphate-dependent aminotransferase family. As to quaternary structure, homodimer. The cofactor is pyridoxal 5'-phosphate.

It catalyses the reaction succinyl-CoA + glycine + H(+) = 5-aminolevulinate + CO2 + CoA. Its pathway is porphyrin-containing compound metabolism; protoporphyrin-IX biosynthesis; 5-aminolevulinate from glycine: step 1/1. This is 5-aminolevulinate synthase (hemA) from Rhizobium meliloti (strain 1021) (Ensifer meliloti).